A 637-amino-acid chain; its full sequence is Threonine--tRNA ligase (637 aa).

One can recognise a TGS domain in the interval 1 to 61; sequence MLNITLPDGS…TEDSSVQIIT (61 aa). Residues 242–533 form a catalytic region; that stretch reads DHRKLGKQLD…LIENHAGSFP (292 aa). Residues Cys333, His384, and His510 each coordinate Zn(2+).

This sequence belongs to the class-II aminoacyl-tRNA synthetase family. As to quaternary structure, homodimer. The cofactor is Zn(2+).

Its subcellular location is the cytoplasm. The catalysed reaction is tRNA(Thr) + L-threonine + ATP = L-threonyl-tRNA(Thr) + AMP + diphosphate + H(+). Functionally, catalyzes the attachment of threonine to tRNA(Thr) in a two-step reaction: L-threonine is first activated by ATP to form Thr-AMP and then transferred to the acceptor end of tRNA(Thr). Also edits incorrectly charged L-seryl-tRNA(Thr). The chain is Threonine--tRNA ligase from Neisseria meningitidis serogroup C (strain 053442).